The sequence spans 195 residues: Small ribosomal subunit protein uS4c (195 aa).

The S4 RNA-binding domain maps to 82–143; the sequence is MRLDNILFRL…KQRSKALIQN (62 aa).

The protein belongs to the universal ribosomal protein uS4 family. Part of the 30S ribosomal subunit. Contacts protein S5. The interaction surface between S4 and S5 is involved in control of translational fidelity.

The protein resides in the plastid. It is found in the chloroplast. Its function is as follows. One of the primary rRNA binding proteins, it binds directly to 16S rRNA where it nucleates assembly of the body of the 30S subunit. With S5 and S12 plays an important role in translational accuracy. This chain is Small ribosomal subunit protein uS4c (rps4), found in Pillansia templemannii.